Consider the following 1241-residue polypeptide: ATP-dependent helicase/nuclease subunit A (1241 aa).

The UvrD-like helicase ATP-binding domain occupies 12-485 (SQWTDDQWKA…IDLAKNFRSR (474 aa)). 33–40 (AAAGSGKT) contributes to the ATP binding site. The 301-residue stretch at 505-805 (GEIDYDADAE…RIMTIHKSKG (301 aa)) folds into the UvrD-like helicase C-terminal domain.

The protein belongs to the helicase family. AddA subfamily. In terms of assembly, heterodimer of AddA and AddB/RexB. Mg(2+) is required as a cofactor.

It carries out the reaction Couples ATP hydrolysis with the unwinding of duplex DNA by translocating in the 3'-5' direction.. The enzyme catalyses ATP + H2O = ADP + phosphate + H(+). The heterodimer acts as both an ATP-dependent DNA helicase and an ATP-dependent, dual-direction single-stranded exonuclease. Recognizes the chi site generating a DNA molecule suitable for the initiation of homologous recombination. The AddA nuclease domain is required for chi fragment generation; this subunit has the helicase and 3' -&gt; 5' nuclease activities. The protein is ATP-dependent helicase/nuclease subunit A of Bacillus cereus (strain AH187).